Reading from the N-terminus, the 163-residue chain is NAD(P)H-quinone oxidoreductase subunit I, chloroplastic (163 aa).

4Fe-4S ferredoxin-type domains are found at residues 55-84 (GRIH…VDWK) and 95-124 (LNYS…MTEE). The [4Fe-4S] cluster site is built by Cys-64, Cys-67, Cys-70, Cys-74, Cys-104, Cys-107, Cys-110, and Cys-114.

The protein belongs to the complex I 23 kDa subunit family. As to quaternary structure, NDH is composed of at least 16 different subunits, 5 of which are encoded in the nucleus. [4Fe-4S] cluster is required as a cofactor.

The protein localises to the plastid. It localises to the chloroplast thylakoid membrane. The enzyme catalyses a plastoquinone + NADH + (n+1) H(+)(in) = a plastoquinol + NAD(+) + n H(+)(out). It carries out the reaction a plastoquinone + NADPH + (n+1) H(+)(in) = a plastoquinol + NADP(+) + n H(+)(out). Functionally, NDH shuttles electrons from NAD(P)H:plastoquinone, via FMN and iron-sulfur (Fe-S) centers, to quinones in the photosynthetic chain and possibly in a chloroplast respiratory chain. The immediate electron acceptor for the enzyme in this species is believed to be plastoquinone. Couples the redox reaction to proton translocation, and thus conserves the redox energy in a proton gradient. The sequence is that of NAD(P)H-quinone oxidoreductase subunit I, chloroplastic from Glycine max (Soybean).